The sequence spans 429 residues: Glutamate-1-semialdehyde 2,1-aminomutase (429 aa).

Lys-265 is modified (N6-(pyridoxal phosphate)lysine).

Belongs to the class-III pyridoxal-phosphate-dependent aminotransferase family. HemL subfamily. Homodimer. Requires pyridoxal 5'-phosphate as cofactor.

Its subcellular location is the cytoplasm. It catalyses the reaction (S)-4-amino-5-oxopentanoate = 5-aminolevulinate. It participates in porphyrin-containing compound metabolism; protoporphyrin-IX biosynthesis; 5-aminolevulinate from L-glutamyl-tRNA(Glu): step 2/2. This chain is Glutamate-1-semialdehyde 2,1-aminomutase, found in Legionella pneumophila (strain Lens).